Here is an 82-residue protein sequence, read N- to C-terminus: DNA-directed RNA polymerase subunit Rpo5 (82 aa).

It belongs to the archaeal Rpo5/eukaryotic RPB5 RNA polymerase subunit family. Part of the RNA polymerase complex.

Its subcellular location is the cytoplasm. The enzyme catalyses RNA(n) + a ribonucleoside 5'-triphosphate = RNA(n+1) + diphosphate. In terms of biological role, DNA-dependent RNA polymerase (RNAP) catalyzes the transcription of DNA into RNA using the four ribonucleoside triphosphates as substrates. The polypeptide is DNA-directed RNA polymerase subunit Rpo5 (Pyrococcus horikoshii (strain ATCC 700860 / DSM 12428 / JCM 9974 / NBRC 100139 / OT-3)).